The primary structure comprises 351 residues: V-type proton ATPase subunit d2 (351 aa).

Belongs to the V-ATPase V0D/AC39 subunit family. V-ATPase is a heteromultimeric enzyme composed of a peripheral catalytic V1 complex (components A to H) attached to an integral membrane V0 proton pore complex (components: a, c, c'', d and e).

The protein resides in the vacuole membrane. Subunit of the integral membrane V0 complex of vacuolar ATPase. Vacuolar ATPase is responsible for acidifying a variety of intracellular compartments in eukaryotic cells, thus providing most of the energy required for transport processes in the vacuolar system. This chain is V-type proton ATPase subunit d2 (VHA-d2), found in Arabidopsis thaliana (Mouse-ear cress).